The chain runs to 416 residues: 5-methylthioadenosine/S-adenosylhomocysteine deaminase 2 (416 aa).

Residues histidine 58 and histidine 60 each coordinate Zn(2+). 2 residues coordinate substrate: glutamate 86 and histidine 178. Histidine 205 is a Zn(2+) binding site. Residues glutamate 208 and aspartate 293 each contribute to the substrate site. Aspartate 293 contributes to the Zn(2+) binding site.

Belongs to the metallo-dependent hydrolases superfamily. MTA/SAH deaminase family. Zn(2+) is required as a cofactor.

The catalysed reaction is S-adenosyl-L-homocysteine + H2O + H(+) = S-inosyl-L-homocysteine + NH4(+). It carries out the reaction S-methyl-5'-thioadenosine + H2O + H(+) = S-methyl-5'-thioinosine + NH4(+). Catalyzes the deamination of 5-methylthioadenosine and S-adenosyl-L-homocysteine into 5-methylthioinosine and S-inosyl-L-homocysteine, respectively. Is also able to deaminate adenosine. The protein is 5-methylthioadenosine/S-adenosylhomocysteine deaminase 2 of Archaeoglobus fulgidus (strain ATCC 49558 / DSM 4304 / JCM 9628 / NBRC 100126 / VC-16).